Here is a 443-residue protein sequence, read N- to C-terminus: Thymidine phosphorylase (443 aa).

The protein belongs to the thymidine/pyrimidine-nucleoside phosphorylase family. Homodimer.

The enzyme catalyses thymidine + phosphate = 2-deoxy-alpha-D-ribose 1-phosphate + thymine. The protein operates within pyrimidine metabolism; dTMP biosynthesis via salvage pathway; dTMP from thymine: step 1/2. The enzymes which catalyze the reversible phosphorolysis of pyrimidine nucleosides are involved in the degradation of these compounds and in their utilization as carbon and energy sources, or in the rescue of pyrimidine bases for nucleotide synthesis. This chain is Thymidine phosphorylase, found in Sodalis glossinidius (strain morsitans).